The primary structure comprises 172 residues: Bifunctional protein PyrR (172 aa).

Positions 90–102 match the PRPP-binding motif; the sequence is LVLVDDVLMSGRT.

The protein belongs to the purine/pyrimidine phosphoribosyltransferase family. PyrR subfamily.

The catalysed reaction is UMP + diphosphate = 5-phospho-alpha-D-ribose 1-diphosphate + uracil. Its function is as follows. Regulates the transcription of the pyrimidine nucleotide (pyr) operon in response to exogenous pyrimidines. In terms of biological role, also displays a weak uracil phosphoribosyltransferase activity which is not physiologically significant. The polypeptide is Bifunctional protein PyrR (Pseudomonas putida (strain GB-1)).